The following is a 929-amino-acid chain: Protein translocase subunit SecA (929 aa).

Residues glutamine 83, 101-105 (GEGKT), and aspartate 491 each bind ATP.

This sequence belongs to the SecA family. Monomer and homodimer. Part of the essential Sec protein translocation apparatus which comprises SecA, SecYEG and auxiliary proteins SecDF. Other proteins may also be involved.

Its subcellular location is the cell inner membrane. It localises to the cellular thylakoid membrane. The protein resides in the cytoplasm. It catalyses the reaction ATP + H2O + cellular proteinSide 1 = ADP + phosphate + cellular proteinSide 2.. Part of the Sec protein translocase complex. Interacts with the SecYEG preprotein conducting channel. Has a central role in coupling the hydrolysis of ATP to the transfer of proteins into and across the cell membrane, serving as an ATP-driven molecular motor driving the stepwise translocation of polypeptide chains across the membrane. Its function is as follows. Probably participates in protein translocation into and across both the cytoplasmic and thylakoid membranes in cyanobacterial cells. This is Protein translocase subunit SecA from Thermosynechococcus vestitus (strain NIES-2133 / IAM M-273 / BP-1).